The sequence spans 276 residues: F420-dependent methylenetetrahydromethanopterin dehydrogenase (276 aa).

It belongs to the MTD family.

The catalysed reaction is 5,10-methylenetetrahydromethanopterin + oxidized coenzyme F420-(gamma-L-Glu)(n) + 2 H(+) = 5,10-methenyl-5,6,7,8-tetrahydromethanopterin + reduced coenzyme F420-(gamma-L-Glu)(n). It participates in one-carbon metabolism; methanogenesis from CO(2); 5,10-methylene-5,6,7,8-tetrahydromethanopterin from 5,10-methenyl-5,6,7,8-tetrahydromethanopterin (coenzyme F420 route): step 1/1. Catalyzes the reversible reduction of methenyl-H(4)MPT(+) to methylene-H(4)MPT. In Methanococcus vannielii (strain ATCC 35089 / DSM 1224 / JCM 13029 / OCM 148 / SB), this protein is F420-dependent methylenetetrahydromethanopterin dehydrogenase.